Consider the following 176-residue polypeptide: Protein GrpE (176 aa).

Belongs to the GrpE family. As to quaternary structure, homodimer.

Its subcellular location is the cytoplasm. Its function is as follows. Participates actively in the response to hyperosmotic and heat shock by preventing the aggregation of stress-denatured proteins, in association with DnaK and GrpE. It is the nucleotide exchange factor for DnaK and may function as a thermosensor. Unfolded proteins bind initially to DnaJ; upon interaction with the DnaJ-bound protein, DnaK hydrolyzes its bound ATP, resulting in the formation of a stable complex. GrpE releases ADP from DnaK; ATP binding to DnaK triggers the release of the substrate protein, thus completing the reaction cycle. Several rounds of ATP-dependent interactions between DnaJ, DnaK and GrpE are required for fully efficient folding. This Meiothermus ruber protein is Protein GrpE.